Reading from the N-terminus, the 209-residue chain is Uracil phosphoribosyltransferase (209 aa).

5-phospho-alpha-D-ribose 1-diphosphate contacts are provided by residues Arg79, Arg104, and 131 to 139 (DPMLATGGS). Uracil contacts are provided by residues Ile194 and 199–201 (GDA). Asp200 lines the 5-phospho-alpha-D-ribose 1-diphosphate pocket.

The protein belongs to the UPRTase family. Mg(2+) is required as a cofactor.

The enzyme catalyses UMP + diphosphate = 5-phospho-alpha-D-ribose 1-diphosphate + uracil. Its pathway is pyrimidine metabolism; UMP biosynthesis via salvage pathway; UMP from uracil: step 1/1. Its activity is regulated as follows. Allosterically activated by GTP. Functionally, catalyzes the conversion of uracil and 5-phospho-alpha-D-ribose 1-diphosphate (PRPP) to UMP and diphosphate. This is Uracil phosphoribosyltransferase from Streptococcus pneumoniae (strain ATCC BAA-255 / R6).